Reading from the N-terminus, the 1238-residue chain is Protein translocase subunit SecA 1 (1238 aa).

ATP-binding positions include Q107, G125 to T129, and D570. The tract at residues A1194–P1220 is disordered. Over residues G1199 to I1215 the composition is skewed to basic and acidic residues. C1221, C1223, C1232, and C1233 together coordinate Zn(2+).

The protein belongs to the SecA family. Monomer and homodimer. Part of the essential Sec protein translocation apparatus which comprises SecA, SecYEG and auxiliary proteins SecDF. Other proteins may also be involved. Requires Zn(2+) as cofactor.

It localises to the cell inner membrane. The protein localises to the cytoplasm. The catalysed reaction is ATP + H2O + cellular proteinSide 1 = ADP + phosphate + cellular proteinSide 2.. In terms of biological role, part of the Sec protein translocase complex. Interacts with the SecYEG preprotein conducting channel. Has a central role in coupling the hydrolysis of ATP to the transfer of proteins into and across the cell membrane, serving as an ATP-driven molecular motor driving the stepwise translocation of polypeptide chains across the membrane. The sequence is that of Protein translocase subunit SecA 1 from Rhodopirellula baltica (strain DSM 10527 / NCIMB 13988 / SH1).